Reading from the N-terminus, the 832-residue chain is Histone acetyltransferase KAT2B (832 aa).

Gly residues predominate over residues 1–22 (MSEAGGAGPGGCGAGAGAGAGP). Disordered regions lie at residues 1 to 54 (MSEA…ACGP) and 395 to 436 (SYNS…DSHV). Residues 24-39 (ALPPQPAALPPAPPQG) are compositionally biased toward pro residues. The segment covering 40-54 (SPCAAAAGGSGACGP) has biased composition (low complexity). Residues 395 to 413 (SYNSTSSSLEQPNAGSSSP) are compositionally biased toward polar residues. Positions 425 to 436 (PGEKRKMTDSHV) are enriched in basic and acidic residues. One can recognise an N-acetyltransferase domain in the interval 503–651 (LNQKPNKKIL…GATLMGCELN (149 aa)). Glu-570 serves as the catalytic Proton donor/acceptor. Acetyl-CoA contacts are provided by residues 574–576 (CAV), 581–587 (QVKGYGT), and 612–615 (YAIG). The disordered stretch occupies residues 706 to 725 (IRETGWKPSGKEKSKEPRDP). Basic and acidic residues predominate over residues 714–725 (SGKEKSKEPRDP). The Bromo domain occupies 723-827 (RDPDQLYSTL…KFFFSKIKEA (105 aa)).

Belongs to the acetyltransferase family. GCN5 subfamily. Interacts with SIRT1. Interacts (unsumoylated form) with NR2C1; the interaction promotes transactivation activity. Interacts with EP300, CREBBP and DDX17. Interacts with NCOA1 and NCOA3. Component of a large chromatin remodeling complex, at least composed of MYSM1, KAT2B/PCAF, RBM10 and KIF11/TRIP5. Interacts with NR2C2 (hypophosphorylated and unsumoylated form); the interaction promotes the transactivation activity of NR2C2. Interacts with KLF1; the interaction does not acetylate KLF1 and there is no enhancement of its transactivational activity. Interacts with NFE4. Interacts with MECOM. Interacts with E2F1; the interaction acetylates E2F1 augmenting its DNA-binding and transcriptional activity. Interacts with NPAS2, BMAL1 and CLOCK. Interacts with BCAS3. Interacts with CEBPB. Interacts with NR4A3. Interacts with NFATC2. Interacts with TBX5. Interacts with PLK4. Interacts with RB1; this interaction leads to RB1 acetylation. Interacts with VRK1. As to quaternary structure, (Microbial infection) Interacts with and acetylates HIV-1 Tat. In terms of assembly, (Microbial infection) Interacts with HTLV-1 Tax. Ubiquitously expressed but most abundant in heart and skeletal muscle. Also expressed in the skin, in keratinocytes (at protein level).

It localises to the nucleus. Its subcellular location is the cytoplasm. The protein resides in the cytoskeleton. It is found in the microtubule organizing center. The protein localises to the centrosome. It catalyses the reaction L-lysyl-[histone] + acetyl-CoA = N(6)-acetyl-L-lysyl-[histone] + CoA + H(+). It carries out the reaction L-lysyl-[protein] + acetyl-CoA = N(6)-acetyl-L-lysyl-[protein] + CoA + H(+). The catalysed reaction is spermidine + acetyl-CoA = N(8)-acetylspermidine + CoA + H(+). With respect to regulation, activated in vitro by very low concentrations of spermidine, but inhibited at spermidine concentrations higher than 4 uM. The activating effect of low spermidine concentrations may be mediated by N(8)-acetylspermidine produced by KAT2B/P/CAF itself acting as a positive feedback loop. In terms of biological role, functions as a histone acetyltransferase (HAT) to promote transcriptional activation. Has significant histone acetyltransferase activity with core histones (H3 and H4), and also with nucleosome core particles. Has a a strong preference for acetylation of H3 at 'Lys-9' (H3K9ac). Also acetylates non-histone proteins, such as ACLY, MAPRE1/EB1, PLK4, RRP9/U3-55K and TBX5. Inhibits cell-cycle progression and counteracts the mitogenic activity of the adenoviral oncoprotein E1A. Acts as a circadian transcriptional coactivator which enhances the activity of the circadian transcriptional activators: NPAS2-BMAL1 and CLOCK-BMAL1 heterodimers. Involved in heart and limb development by mediating acetylation of TBX5, acetylation regulating nucleocytoplasmic shuttling of TBX5. Acts as a negative regulator of centrosome amplification by mediating acetylation of PLK4. Acetylates RRP9/U3-55K, a core subunit of the U3 snoRNP complex, impairing pre-rRNA processing. Acetylates MAPRE1/EB1, promoting dynamic kinetochore-microtubule interactions in early mitosis. Also acetylates spermidine. Functionally, (Microbial infection) In case of HIV-1 infection, it is recruited by the viral protein Tat. Regulates Tat's transactivating activity and may help inducing chromatin remodeling of proviral genes. The polypeptide is Histone acetyltransferase KAT2B (Homo sapiens (Human)).